Consider the following 101-residue polypeptide: Large ribosomal subunit protein bL25 (101 aa).

Belongs to the bacterial ribosomal protein bL25 family. In terms of assembly, part of the 50S ribosomal subunit; part of the 5S rRNA/L5/L18/L25 subcomplex. Contacts the 5S rRNA. Binds to the 5S rRNA independently of L5 and L18.

Its function is as follows. This is one of the proteins that binds to the 5S RNA in the ribosome where it forms part of the central protuberance. The chain is Large ribosomal subunit protein bL25 from Thermosynechococcus vestitus (strain NIES-2133 / IAM M-273 / BP-1).